Consider the following 248-residue polypeptide: Mannosylfructose-phosphate phosphatase (248 aa).

The protein belongs to the sucrose phosphatase family.

It catalyses the reaction beta-D-fructofuranosyl alpha-D-mannopyranoside 6(F)-phosphate + H2O = beta-D-fructofuranosyl alpha-D-mannopyranoside + phosphate. It functions in the pathway carbohydrate metabolism; mannosylfructose biosynthesis; beta-D-fructofuranosyl alpha-D-mannopyranoside from D-fructose 6-phosphate and GDP-alpha-D-mannose: step 2/2. Its activity is regulated as follows. Inhibited by the phosphatase inhibitors fluoride, molybdate and orthovanadate. The chain is Mannosylfructose-phosphate phosphatase from Agrobacterium fabrum (strain C58 / ATCC 33970) (Agrobacterium tumefaciens (strain C58)).